Here is a 225-residue protein sequence, read N- to C-terminus: NAD(P)H-quinone oxidoreductase subunit K, chloroplastic (225 aa).

4 residues coordinate [4Fe-4S] cluster: C43, C44, C108, and C139.

The protein belongs to the complex I 20 kDa subunit family. In terms of assembly, NDH is composed of at least 16 different subunits, 5 of which are encoded in the nucleus. The cofactor is [4Fe-4S] cluster.

The protein resides in the plastid. It localises to the chloroplast thylakoid membrane. It carries out the reaction a plastoquinone + NADH + (n+1) H(+)(in) = a plastoquinol + NAD(+) + n H(+)(out). The catalysed reaction is a plastoquinone + NADPH + (n+1) H(+)(in) = a plastoquinol + NADP(+) + n H(+)(out). In terms of biological role, NDH shuttles electrons from NAD(P)H:plastoquinone, via FMN and iron-sulfur (Fe-S) centers, to quinones in the photosynthetic chain and possibly in a chloroplast respiratory chain. The immediate electron acceptor for the enzyme in this species is believed to be plastoquinone. Couples the redox reaction to proton translocation, and thus conserves the redox energy in a proton gradient. The polypeptide is NAD(P)H-quinone oxidoreductase subunit K, chloroplastic (Helianthus annuus (Common sunflower)).